The primary structure comprises 122 residues: Acidic phospholipase A2 1 (122 aa).

Disulfide bonds link C26/C115, C28/C44, C43/C94, C49/C122, C50/C87, C57/C81, and C75/C85. Residues Y27, G29, and G31 each coordinate Ca(2+). Residue H47 is part of the active site. D48 serves as a coordination point for Ca(2+). D88 is an active-site residue.

This sequence belongs to the phospholipase A2 family. Group II subfamily. D49 sub-subfamily. As to quaternary structure, homodimer. Ca(2+) serves as cofactor. As to expression, expressed by the venom gland.

It localises to the secreted. It catalyses the reaction a 1,2-diacyl-sn-glycero-3-phosphocholine + H2O = a 1-acyl-sn-glycero-3-phosphocholine + a fatty acid + H(+). In terms of biological role, PLA2 catalyzes the calcium-dependent hydrolysis of the 2-acyl groups in 3-sn-phosphoglycerides. This chain is Acidic phospholipase A2 1, found in Protobothrops mucrosquamatus (Taiwan habu).